A 364-amino-acid polypeptide reads, in one-letter code: Probable dual-specificity RNA methyltransferase RlmN (364 aa).

The Proton acceptor role is filled by Glu-109. The region spanning 123–351 (PKARLTVCVS…VSVRYSRGLE (229 aa)) is the Radical SAM core domain. Residues Cys-130 and Cys-356 are joined by a disulfide bond. [4Fe-4S] cluster-binding residues include Cys-137, Cys-141, and Cys-144. S-adenosyl-L-methionine is bound by residues 184–185 (GE), Ser-214, 237–239 (SLH), and Asn-313. Cys-356 acts as the S-methylcysteine intermediate in catalysis.

Belongs to the radical SAM superfamily. RlmN family. [4Fe-4S] cluster is required as a cofactor.

It localises to the cytoplasm. The catalysed reaction is adenosine(2503) in 23S rRNA + 2 reduced [2Fe-2S]-[ferredoxin] + 2 S-adenosyl-L-methionine = 2-methyladenosine(2503) in 23S rRNA + 5'-deoxyadenosine + L-methionine + 2 oxidized [2Fe-2S]-[ferredoxin] + S-adenosyl-L-homocysteine. It carries out the reaction adenosine(37) in tRNA + 2 reduced [2Fe-2S]-[ferredoxin] + 2 S-adenosyl-L-methionine = 2-methyladenosine(37) in tRNA + 5'-deoxyadenosine + L-methionine + 2 oxidized [2Fe-2S]-[ferredoxin] + S-adenosyl-L-homocysteine. In terms of biological role, specifically methylates position 2 of adenine 2503 in 23S rRNA and position 2 of adenine 37 in tRNAs. In Nostoc punctiforme (strain ATCC 29133 / PCC 73102), this protein is Probable dual-specificity RNA methyltransferase RlmN.